The chain runs to 373 residues: Flagellar P-ring protein (373 aa).

The signal sequence occupies residues 1 to 28 (MPSVSAVILKLAAAALSALLLSGVAANA).

This sequence belongs to the FlgI family. As to quaternary structure, the basal body constitutes a major portion of the flagellar organelle and consists of four rings (L,P,S, and M) mounted on a central rod.

The protein resides in the periplasm. It localises to the bacterial flagellum basal body. In terms of biological role, assembles around the rod to form the L-ring and probably protects the motor/basal body from shearing forces during rotation. This is Flagellar P-ring protein from Rhodopseudomonas palustris (strain HaA2).